The primary structure comprises 299 residues: Tyrosine recombinase XerC (299 aa).

Residues Ser2–Val88 enclose the Core-binding (CB) domain. The Tyr recombinase domain occupies Pro109–Asp289. Catalysis depends on residues Arg148, Lys172, His241, Arg244, and His267. Tyr276 serves as the catalytic O-(3'-phospho-DNA)-tyrosine intermediate.

Belongs to the 'phage' integrase family. XerC subfamily. Forms a cyclic heterotetrameric complex composed of two molecules of XerC and two molecules of XerD.

The protein resides in the cytoplasm. Functionally, site-specific tyrosine recombinase, which acts by catalyzing the cutting and rejoining of the recombining DNA molecules. The XerC-XerD complex is essential to convert dimers of the bacterial chromosome into monomers to permit their segregation at cell division. It also contributes to the segregational stability of plasmids. The protein is Tyrosine recombinase XerC of Psychromonas ingrahamii (strain DSM 17664 / CCUG 51855 / 37).